The primary structure comprises 204 residues: Ancillary SecYEG translocon subunit (204 aa).

The Cytoplasmic portion of the chain corresponds to 1–23; it reads MAYSIEEEQEINQLKDWWKENGK. A helical membrane pass occupies residues 24–42; it reads TIIVAFILGVGGMFGWRYW. The Periplasmic portion of the chain corresponds to 43–204; it reads QTHQAEQIAQ…QMAKMKLNNL (162 aa).

It belongs to the YfgM family. In terms of assembly, interacts with the SecYEG translocon. Forms a complex with PpiD.

It localises to the cell inner membrane. Its function is as follows. May mediate protein transfer from the SecYEG translocon to the periplasmic chaperone network via its periplasmic C-terminal region. This is Ancillary SecYEG translocon subunit from Haemophilus influenzae (strain ATCC 51907 / DSM 11121 / KW20 / Rd).